The primary structure comprises 642 residues: Threonine--tRNA ligase (642 aa).

One can recognise a TGS domain in the interval 1 to 61 (MPVITLPDGS…ENDATLSIIT (61 aa)). The tract at residues 243 to 534 (DHRKIGKQLD…LTEEFAGFFP (292 aa)) is catalytic. Residues cysteine 334, histidine 385, and histidine 511 each contribute to the Zn(2+) site.

The protein belongs to the class-II aminoacyl-tRNA synthetase family. Homodimer. The cofactor is Zn(2+).

The protein localises to the cytoplasm. It catalyses the reaction tRNA(Thr) + L-threonine + ATP = L-threonyl-tRNA(Thr) + AMP + diphosphate + H(+). In terms of biological role, catalyzes the attachment of threonine to tRNA(Thr) in a two-step reaction: L-threonine is first activated by ATP to form Thr-AMP and then transferred to the acceptor end of tRNA(Thr). Also edits incorrectly charged L-seryl-tRNA(Thr). The polypeptide is Threonine--tRNA ligase (Salmonella agona (strain SL483)).